The chain runs to 572 residues: 2-succinyl-5-enolpyruvyl-6-hydroxy-3-cyclohexene-1-carboxylate synthase (572 aa).

This sequence belongs to the TPP enzyme family. MenD subfamily. As to quaternary structure, homodimer. Mg(2+) serves as cofactor. The cofactor is Mn(2+). Requires thiamine diphosphate as cofactor.

The catalysed reaction is isochorismate + 2-oxoglutarate + H(+) = 5-enolpyruvoyl-6-hydroxy-2-succinyl-cyclohex-3-ene-1-carboxylate + CO2. Its pathway is quinol/quinone metabolism; 1,4-dihydroxy-2-naphthoate biosynthesis; 1,4-dihydroxy-2-naphthoate from chorismate: step 2/7. It functions in the pathway quinol/quinone metabolism; menaquinone biosynthesis. In terms of biological role, catalyzes the thiamine diphosphate-dependent decarboxylation of 2-oxoglutarate and the subsequent addition of the resulting succinic semialdehyde-thiamine pyrophosphate anion to isochorismate to yield 2-succinyl-5-enolpyruvyl-6-hydroxy-3-cyclohexene-1-carboxylate (SEPHCHC). This Vibrio campbellii (strain ATCC BAA-1116) protein is 2-succinyl-5-enolpyruvyl-6-hydroxy-3-cyclohexene-1-carboxylate synthase.